A 759-amino-acid polypeptide reads, in one-letter code: Forkhead box protein M1 (759 aa).

2 disordered regions span residues 1–54 (MRTS…AESS) and 94–165 (KGKE…QRQE). The span at 36 to 54 (PGQQEPTQAQASQDVAESS) shows a compositional bias: polar residues. Over residues 141–151 (LGPKPGAKGVP) the composition is skewed to low complexity. Glycyl lysine isopeptide (Lys-Gly) (interchain with G-Cter in SUMO2) cross-links involve residues lysine 200 and lysine 324. The segment at residues 234 to 326 (ERPPYSYMAM…LTLDQVFKPL (93 aa)) is a DNA-binding region (fork-head). The interval 328–349 (PGSPQSPEHLESQQKRPNPELR) is disordered. Serine 330 is subject to Phosphoserine. Residues 335 to 349 (EHLESQQKRPNPELR) are compositionally biased toward basic and acidic residues. Lysine 355 is covalently cross-linked (Glycyl lysine isopeptide (Lys-Gly) (interchain with G-Cter in SUMO2)). Serine 375 is subject to Phosphoserine; by CHEK2. Glycyl lysine isopeptide (Lys-Gly) (interchain with G-Cter in SUMO2) cross-links involve residues lysine 421 and lysine 439. Serine 521 carries the post-translational modification Phosphoserine. 3 disordered regions span residues 530 to 556 (LVTK…CLDE), 572 to 643 (MEIL…PQGA), and 681 to 706 (LASD…LQVP). Residues 531 to 542 (VTKRREKREVSR) show a composition bias toward basic and acidic residues. Over residues 604 to 613 (PVSSTPSKSV) the composition is skewed to polar residues. Threonine 608 is modified (phosphothreonine; by CDK1). Phosphothreonine is present on threonine 624. Serine 726 and serine 735 each carry phosphoserine; by PLK1.

Phosphorylated in M (mitotic) phase. Phosphorylation by the checkpoint kinase CHEK2 in response to DNA damage increases the FOXM1 protein stability probably stimulating the transcription of genes involved in DNA repair. Phosphorylated by CDK1 in late S and G2 phases, creating docking sites for the POLO box domains of PLK1. Subsequently, PLK1 binds and phosphorylates FOXM1, leading to activation of transcriptional activity and subsequent enhanced expression of key mitotic regulators. Phosphorylated by GSK3B leading to ubiquitination and proteasomal degradation. As to expression, highly expressed in thymus and testis, but weakly in intestine and lung. Appears to be expressed only in adult organs containing proliferating/cycling cells or in response to growth factors.

It is found in the nucleus. Functionally, transcription factor regulating the expression of cell cycle genes essential for DNA replication and mitosis. Plays a role in the control of cell proliferation. Also plays a role in DNA break repair, participating in the DNA damage checkpoint response. Promotes transcription of PHB2. This chain is Forkhead box protein M1 (Foxm1), found in Rattus norvegicus (Rat).